The sequence spans 569 residues: Adenine deaminase (569 aa).

This sequence belongs to the metallo-dependent hydrolases superfamily. Adenine deaminase family. Mn(2+) is required as a cofactor.

It catalyses the reaction adenine + H2O + H(+) = hypoxanthine + NH4(+). The sequence is that of Adenine deaminase from Desulfitobacterium hafniense (strain Y51).